A 79-amino-acid polypeptide reads, in one-letter code: Small ribosomal subunit protein uS17 (79 aa).

Belongs to the universal ribosomal protein uS17 family. Part of the 30S ribosomal subunit.

Its function is as follows. One of the primary rRNA binding proteins, it binds specifically to the 5'-end of 16S ribosomal RNA. The chain is Small ribosomal subunit protein uS17 from Caulobacter vibrioides (strain NA1000 / CB15N) (Caulobacter crescentus).